We begin with the raw amino-acid sequence, 208 residues long: Methylthioribulose-1-phosphate dehydratase (208 aa).

Zn(2+)-binding residues include H98 and H100.

The protein belongs to the aldolase class II family. MtnB subfamily. It depends on Zn(2+) as a cofactor.

The enzyme catalyses 5-(methylsulfanyl)-D-ribulose 1-phosphate = 5-methylsulfanyl-2,3-dioxopentyl phosphate + H2O. The protein operates within amino-acid biosynthesis; L-methionine biosynthesis via salvage pathway; L-methionine from S-methyl-5-thio-alpha-D-ribose 1-phosphate: step 2/6. In terms of biological role, catalyzes the dehydration of methylthioribulose-1-phosphate (MTRu-1-P) into 2,3-diketo-5-methylthiopentyl-1-phosphate (DK-MTP-1-P). The chain is Methylthioribulose-1-phosphate dehydratase from Marinobacter nauticus (strain ATCC 700491 / DSM 11845 / VT8) (Marinobacter aquaeolei).